A 341-amino-acid chain; its full sequence is Holliday junction branch migration complex subunit RuvB (341 aa).

Residues 1 to 180 (MAKSHTLNPE…FGIQLRLDYY (180 aa)) form a large ATPase domain (RuvB-L) region. Positions 19, 20, 61, 64, 65, 66, 170, 180, and 217 each coordinate ATP. Thr65 lines the Mg(2+) pocket. Residues 181–251 (NDEEMKEIVL…LCLKAFEKMG (71 aa)) form a small ATPAse domain (RuvB-S) region. The head domain (RuvB-H) stretch occupies residues 254–341 (DLGLDGMDRQ…ENHGQDPTLF (88 aa)). Positions 309 and 314 each coordinate DNA.

The protein belongs to the RuvB family. Homohexamer. Forms an RuvA(8)-RuvB(12)-Holliday junction (HJ) complex. HJ DNA is sandwiched between 2 RuvA tetramers; dsDNA enters through RuvA and exits via RuvB. An RuvB hexamer assembles on each DNA strand where it exits the tetramer. Each RuvB hexamer is contacted by two RuvA subunits (via domain III) on 2 adjacent RuvB subunits; this complex drives branch migration. In the full resolvosome a probable DNA-RuvA(4)-RuvB(12)-RuvC(2) complex forms which resolves the HJ.

Its subcellular location is the cytoplasm. The catalysed reaction is ATP + H2O = ADP + phosphate + H(+). In terms of biological role, the RuvA-RuvB-RuvC complex processes Holliday junction (HJ) DNA during genetic recombination and DNA repair, while the RuvA-RuvB complex plays an important role in the rescue of blocked DNA replication forks via replication fork reversal (RFR). RuvA specifically binds to HJ cruciform DNA, conferring on it an open structure. The RuvB hexamer acts as an ATP-dependent pump, pulling dsDNA into and through the RuvAB complex. RuvB forms 2 homohexamers on either side of HJ DNA bound by 1 or 2 RuvA tetramers; 4 subunits per hexamer contact DNA at a time. Coordinated motions by a converter formed by DNA-disengaged RuvB subunits stimulates ATP hydrolysis and nucleotide exchange. Immobilization of the converter enables RuvB to convert the ATP-contained energy into a lever motion, pulling 2 nucleotides of DNA out of the RuvA tetramer per ATP hydrolyzed, thus driving DNA branch migration. The RuvB motors rotate together with the DNA substrate, which together with the progressing nucleotide cycle form the mechanistic basis for DNA recombination by continuous HJ branch migration. Branch migration allows RuvC to scan DNA until it finds its consensus sequence, where it cleaves and resolves cruciform DNA. This Leptospira borgpetersenii serovar Hardjo-bovis (strain JB197) protein is Holliday junction branch migration complex subunit RuvB.